Consider the following 184-residue polypeptide: Dirigent protein 13 (184 aa).

The N-terminal stretch at 1-25 is a signal peptide; the sequence is MANQIYIISLIFLSVLLYQSTTVLS. A disulfide bridge links Cys-36 with Cys-182. N-linked (GlcNAc...) asparagine glycosylation is found at Asn-55 and Asn-119.

This sequence belongs to the plant dirigent protein family. As to quaternary structure, homodimer. In terms of tissue distribution, expressed in root vasculature and meristems, cotyledons, flowers, siliques, and leaf trichomes. Localized in the interfascicular/vascular cambia and developing xylem.

The protein localises to the secreted. Its subcellular location is the extracellular space. The protein resides in the apoplast. Its function is as follows. Dirigent proteins impart stereoselectivity on the phenoxy radical-coupling reaction, yielding optically active lignans from two molecules of coniferyl alcohol in the biosynthesis of lignans, flavonolignans, and alkaloids and thus plays a central role in plant secondary metabolism. The protein is Dirigent protein 13 (DIR13) of Arabidopsis thaliana (Mouse-ear cress).